Reading from the N-terminus, the 367-residue chain is D-alanine--D-alanine ligase (367 aa).

The 208-residue stretch at 150 to 357 folds into the ATP-grasp domain; it reads KKLLASAGLP…YPTLLATMVE (208 aa). 178-233 lines the ATP pocket; it reads RERLGLPVFVKPSRGGSSIGVSRVTAWDELPAAIELARRHDPKVIIEAAVPGRELE. 3 residues coordinate Mg(2+): Asp-312, Glu-324, and Asn-326.

This sequence belongs to the D-alanine--D-alanine ligase family. Requires Mg(2+) as cofactor. The cofactor is Mn(2+).

Its subcellular location is the cytoplasm. It catalyses the reaction 2 D-alanine + ATP = D-alanyl-D-alanine + ADP + phosphate + H(+). It functions in the pathway cell wall biogenesis; peptidoglycan biosynthesis. Its function is as follows. Cell wall formation. The protein is D-alanine--D-alanine ligase of Mycolicibacterium gilvum (strain PYR-GCK) (Mycobacterium gilvum (strain PYR-GCK)).